Reading from the N-terminus, the 101-residue chain is MEALPSNLIFHELIGLYAEVFESTNPKLINICGRVIDETRNMLIIETEDTHEKMVPKNGTTFVFHLPSSSADHDQRVKIFGTLLLSQPENRVKNIRKIRMR.

The protein belongs to the eukaryotic/archaeal RNase P protein component 1 family. Consists of a catalytic RNA component and at least 4-5 protein subunits.

It localises to the cytoplasm. It catalyses the reaction Endonucleolytic cleavage of RNA, removing 5'-extranucleotides from tRNA precursor.. Part of ribonuclease P, a protein complex that generates mature tRNA molecules by cleaving their 5'-ends. This is Ribonuclease P protein component 1 from Methanococcoides burtonii (strain DSM 6242 / NBRC 107633 / OCM 468 / ACE-M).